A 129-amino-acid polypeptide reads, in one-letter code: Histone H2A-IV (129 aa).

The segment at 1–22 is disordered; that stretch reads MSGRGKQGGKARAKAKSRSSRA. An N-acetylserine modification is found at S2. Position 2 is a phosphoserine (S2). The residue at position 6 (K6) is an N6-(2-hydroxyisobutyryl)lysine. N6-acetyllysine is present on residues K6 and K10. Over residues 7-19 the composition is skewed to basic residues; it reads QGGKARAKAKSRS. An N6-(2-hydroxyisobutyryl)lysine; alternate modification is found at K10. Position 10 is an N6-lactoyllysine; alternate (K10). K10 bears the N6-succinyllysine mark. Residues K14 and K16 each participate in a glycyl lysine isopeptide (Lys-Gly) (interchain with G-Cter in ubiquitin) cross-link. K37 carries the post-translational modification N6-(2-hydroxyisobutyryl)lysine; alternate. N6-(2-hydroxyisobutyryl)lysine is present on residues K75 and K76. The residue at position 96 (K96) is an N6-(2-hydroxyisobutyryl)lysine; alternate. Residue K96 is modified to N6-succinyllysine. N6-glutaryllysine; alternate is present on K96. K100 is modified (N6-glutaryllysine). Position 105 is an N5-methylglutamine (Q105). The residue at position 119 (K119) is an N6-(2-hydroxyisobutyryl)lysine; alternate. K119 and K120 each carry N6-glutaryllysine; alternate. K120 participates in a covalent cross-link: Glycyl lysine isopeptide (Lys-Gly) (interchain with G-Cter in ubiquitin).

This sequence belongs to the histone H2A family. As to quaternary structure, the nucleosome is a histone octamer containing two molecules each of H2A, H2B, H3 and H4 assembled in one H3-H4 heterotetramer and two H2A-H2B heterodimers. The octamer wraps approximately 147 bp of DNA. In terms of processing, monoubiquitination of Lys-120 (H2AK119Ub) gives a specific tag for epigenetic transcriptional repression. Following DNA double-strand breaks (DSBs), it is ubiquitinated through 'Lys-63' linkage of ubiquitin moieties, leading to the recruitment of repair proteins to sites of DNA damage. H2AK119Ub and ionizing radiation-induced 'Lys-63'-linked ubiquitination are distinct events. Phosphorylation on Ser-2 is enhanced during mitosis. Phosphorylation on Ser-2 directly represses transcription. Post-translationally, glutamine methylation at Gln-105 (H2AQ104me) by FBL is specifically dedicated to polymerase I. It is present at 35S ribosomal DNA locus and impairs binding of the FACT complex.

The protein resides in the nucleus. The protein localises to the chromosome. Core component of nucleosome. Nucleosomes wrap and compact DNA into chromatin, limiting DNA accessibility to the cellular machineries which require DNA as a template. Histones thereby play a central role in transcription regulation, DNA repair, DNA replication and chromosomal stability. DNA accessibility is regulated via a complex set of post-translational modifications of histones, also called histone code, and nucleosome remodeling. The chain is Histone H2A-IV from Gallus gallus (Chicken).